A 277-amino-acid chain; its full sequence is Probable cytochrome c oxidase subunit 3 (277 aa).

The next 6 membrane-spanning stretches (helical) occupy residues 20 to 40, 45 to 65, 88 to 108, 173 to 193, 211 to 231, and 255 to 275; these read PWPI…VSFM, FNHY…YSWW, IGMA…FASF, CVTA…MQAY, FYLA…FLIV, and AWYW…VYIF.

It belongs to the cytochrome c oxidase subunit 3 family.

The protein resides in the cell membrane. It carries out the reaction 4 Fe(II)-[cytochrome c] + O2 + 8 H(+)(in) = 4 Fe(III)-[cytochrome c] + 2 H2O + 4 H(+)(out). The polypeptide is Probable cytochrome c oxidase subunit 3 (ctaE) (Rickettsia bellii (strain RML369-C)).